A 344-amino-acid polypeptide reads, in one-letter code: Trace amine-associated receptor 8b (344 aa).

Over 1 to 33 the chain is Extracellular; the sequence is MTSNFSQATLQLCYENVNASCIKTPYSPGLRVL. 2 N-linked (GlcNAc...) asparagine glycosylation sites follow: asparagine 4 and asparagine 18. 2 disulfide bridges follow: cysteine 21/cysteine 185 and cysteine 104/cysteine 189. A helical transmembrane segment spans residues 34 to 54; it reads LYMVFGFGAVLAVCGNLLVVI. Over 55-67 the chain is Cytoplasmic; the sequence is SVLHFKQLHSPAN. Residues 68–88 form a helical membrane-spanning segment; that stretch reads FLIASLASADFLVGISVMPFS. The Extracellular segment spans residues 89-102; that stretch reads MVRSIESCWYFGDT. The chain crosses the membrane as a helical span at residues 103–127; it reads FCSLHSCCDAAFCYSSLFHLCFISV. Residues 128–146 lie on the Cytoplasmic side of the membrane; sequence DRYIAVTEPLVYPTKFTMS. The helical transmembrane segment at 147–167 threads the bilayer; the sequence is VSGICISISWILPLVYSSAVF. The Extracellular segment spans residues 168 to 196; sequence YTGISATGIENLVSALNCVGGCQVAINQD. A helical transmembrane segment spans residues 197 to 217; the sequence is WVLISFLLFFIPTLVMIILYS. Residues 218-256 lie on the Cytoplasmic side of the membrane; that stretch reads KIFLVAKQQAVKIETSISGSKGESSLESHKARVAKRERK. Residues 257–277 form a helical membrane-spanning segment; that stretch reads AAKTLGVTVMAFMVSWLPYTI. Over 278-295 the chain is Extracellular; it reads DTLIDAFMGFITPAYVYE. Residues 296–319 form a helical membrane-spanning segment; sequence ICGWIAYYNSAMNPLIYAFFYPWF. Topologically, residues 320 to 344 are cytoplasmic; the sequence is RKAIKLILSGKILKGHSSTTSLFSE.

Belongs to the G-protein coupled receptor 1 family.

It localises to the cell membrane. Its function is as follows. Olfactory receptor activated by trace amines. Trace amine compounds are enriched in animal body fluids and act on trace amine-associated receptors (TAARs) to elicit both intraspecific and interspecific innate behaviors. Ligand-binding causes a conformation change that triggers signaling via G(s)-class of G alpha proteins (GNAL or GNAS). In Rattus norvegicus (Rat), this protein is Trace amine-associated receptor 8b.